The following is a 71-amino-acid chain: Immune-induced peptide 18 (71 aa).

A signal peptide spans 1–24 (MKLIALCCLLLLGLLGFLAAPGVA). A propeptide spanning residues 25-26 (SP) is cleaved from the precursor. The disordered stretch occupies residues 26-71 (PSRHTGPGNGSGSGAGSGNPFRSPSSQQRPLYYDAPIGKPSKTMYA). Residues 32–42 (PGNGSGSGAGS) show a composition bias toward gly residues.

In terms of tissue distribution, hemolymph (at protein level).

It is found in the secreted. The polypeptide is Immune-induced peptide 18 (IM18) (Drosophila melanogaster (Fruit fly)).